Consider the following 428-residue polypeptide: Adenylosuccinate synthetase (428 aa).

GTP contacts are provided by residues 12–18 (GDEGKGK) and 40–42 (GHT). Aspartate 13 functions as the Proton acceptor in the catalytic mechanism. 2 residues coordinate Mg(2+): aspartate 13 and glycine 40. Residues 13–16 (DEGK), 38–41 (NAGH), threonine 129, arginine 143, glutamine 224, threonine 239, and arginine 303 contribute to the IMP site. The Proton donor role is filled by histidine 41. 299 to 305 (VTTGRIR) provides a ligand contact to substrate. Residues arginine 305, 331–333 (KVD), and 410–412 (AYG) each bind GTP.

This sequence belongs to the adenylosuccinate synthetase family. In terms of assembly, homodimer. It depends on Mg(2+) as a cofactor.

Its subcellular location is the cytoplasm. It catalyses the reaction IMP + L-aspartate + GTP = N(6)-(1,2-dicarboxyethyl)-AMP + GDP + phosphate + 2 H(+). Its pathway is purine metabolism; AMP biosynthesis via de novo pathway; AMP from IMP: step 1/2. Functionally, plays an important role in the de novo pathway of purine nucleotide biosynthesis. Catalyzes the first committed step in the biosynthesis of AMP from IMP. The protein is Adenylosuccinate synthetase of Francisella tularensis subsp. mediasiatica (strain FSC147).